A 253-amino-acid chain; its full sequence is Ubiquinone/menaquinone biosynthesis C-methyltransferase UbiE (253 aa).

Residues Thr76, Asp97, and 125–126 (NA) contribute to the S-adenosyl-L-methionine site.

It belongs to the class I-like SAM-binding methyltransferase superfamily. MenG/UbiE family.

The catalysed reaction is a 2-demethylmenaquinol + S-adenosyl-L-methionine = a menaquinol + S-adenosyl-L-homocysteine + H(+). It catalyses the reaction a 2-methoxy-6-(all-trans-polyprenyl)benzene-1,4-diol + S-adenosyl-L-methionine = a 5-methoxy-2-methyl-3-(all-trans-polyprenyl)benzene-1,4-diol + S-adenosyl-L-homocysteine + H(+). It participates in quinol/quinone metabolism; menaquinone biosynthesis; menaquinol from 1,4-dihydroxy-2-naphthoate: step 2/2. The protein operates within cofactor biosynthesis; ubiquinone biosynthesis. Methyltransferase required for the conversion of demethylmenaquinol (DMKH2) to menaquinol (MKH2) and the conversion of 2-polyprenyl-6-methoxy-1,4-benzoquinol (DDMQH2) to 2-polyprenyl-3-methyl-6-methoxy-1,4-benzoquinol (DMQH2). The protein is Ubiquinone/menaquinone biosynthesis C-methyltransferase UbiE of Rhodopseudomonas palustris (strain BisB5).